Here is a 552-residue protein sequence, read N- to C-terminus: Histone deacetylase 15 (552 aa).

The segment at 86-115 (EFVKWCCVNCTMSNPGDMVHCCICGEHKES) adopts a RanBP2-type zinc-finger fold. A histone deacetylase region spans residues 149-462 (STAVGFDERM…ATAVIKVLLG (314 aa)). Residue H277 is the Proton donor/acceptor of the active site. Positions 313, 315, and 404 each coordinate Zn(2+).

The protein belongs to the histone deacetylase family. HD type 2 subfamily. As to quaternary structure, interacts with PIF3 in the dark. Interacts with HY5. Interacts with MYB96. Forms homotetramers. Zn(2+) serves as cofactor. Expressed in stems, leaves, flowers, siliques and mature seeds.

The protein localises to the nucleus. Its subcellular location is the cytoplasm. It carries out the reaction N(6)-acetyl-L-lysyl-[histone] + H2O = L-lysyl-[histone] + acetate. Inhibited by trichostatin A (TSA), a well-known histone deacetylase inhibitor. In terms of biological role, responsible for the deacetylation of lysine residues on the N-terminal part of the core histones (H2A, H2B, H3 and H4). Histone deacetylation gives a tag for epigenetic repression and plays an important role in transcriptional regulation, cell cycle progression and developmental events. Histone deacetylases act via the formation of large multiprotein complexes. Represses chlorophyll biosynthesis and photosynthesis in the dark. Is recruited by PIF3 to the promoters of chlorophyll biosynthetic and photosynthetic genes, and represses their transcription by histone deacetylation. Involved in the repression of hypocotyl cell elongation to promote photomorphogenesis. Is recruited by HY5 to the promoters of a subset of cell wall organization and auxin signaling-related genes, and represses gene expression by decreasing the levels of histone H4 acetylation in a light-dependent manner. Promotes abscisic acid (ABA) signaling. Is recruited by MYB96 to the promoters of a subset of Rho GTPase (ROP) genes, which repress ABA signaling at the early stages of signal transduction. Represses ROP expression by removing acetyl groups of histone H3 and H4 from the cognate regions, particularly in the presence of ABA. Represses the plant response to elevated ambient temperature by directly repressing warm temperature-responsive genes. The chain is Histone deacetylase 15 from Arabidopsis thaliana (Mouse-ear cress).